Here is a 1336-residue protein sequence, read N- to C-terminus: DNA-directed RNA polymerase subunit beta' (1336 aa).

Zn(2+) is bound by residues cysteine 60, cysteine 62, cysteine 75, and cysteine 78. The Mg(2+) site is built by aspartate 535, aspartate 537, and aspartate 539. Zn(2+) is bound by residues cysteine 902, cysteine 984, cysteine 991, and cysteine 994.

Belongs to the RNA polymerase beta' chain family. The RNAP catalytic core consists of 2 alpha, 1 beta, 1 beta' and 1 omega subunit. When a sigma factor is associated with the core the holoenzyme is formed, which can initiate transcription. Mg(2+) is required as a cofactor. The cofactor is Zn(2+).

The enzyme catalyses RNA(n) + a ribonucleoside 5'-triphosphate = RNA(n+1) + diphosphate. Functionally, DNA-dependent RNA polymerase catalyzes the transcription of DNA into RNA using the four ribonucleoside triphosphates as substrates. This Corynebacterium diphtheriae (strain ATCC 700971 / NCTC 13129 / Biotype gravis) protein is DNA-directed RNA polymerase subunit beta'.